A 515-amino-acid polypeptide reads, in one-letter code: GMP synthase [glutamine-hydrolyzing] (515 aa).

The Glutamine amidotransferase type-1 domain occupies 10–200 (TIIVLDFGSQ…VFGVCGCSEG (191 aa)). Cysteine 87 functions as the Nucleophile in the catalytic mechanism. Active-site residues include histidine 174 and glutamate 176. The region spanning 201 to 390 (WNMENFIEVE…LGIPDEIVWR (190 aa)) is the GMPS ATP-PPase domain. Position 228 to 234 (228 to 234 (SGGVDSS)) interacts with ATP.

Homodimer.

The enzyme catalyses XMP + L-glutamine + ATP + H2O = GMP + L-glutamate + AMP + diphosphate + 2 H(+). Its pathway is purine metabolism; GMP biosynthesis; GMP from XMP (L-Gln route): step 1/1. Functionally, catalyzes the synthesis of GMP from XMP. The protein is GMP synthase [glutamine-hydrolyzing] of Bacillus anthracis (strain A0248).